A 566-amino-acid chain; its full sequence is Chaperone ric-8 (566 aa).

The protein belongs to the synembryn family. As to quaternary structure, interacts with GDP-bound G-alpha proteins goa-1 and gpa-16. Does not interact with G-alpha proteins when they are in complex with subunits beta and gamma. As to expression, present throughout the nervous system in juveniles and adults (at protein level).

Its subcellular location is the cytoplasm. It localises to the cell cortex. Its function is as follows. Chaperone that specifically binds and folds some, but not all, nascent G alpha proteins prior to G protein heterotrimer formation, promoting their stability and activity. Also acts as a guanine nucleotide exchange factor (GEF) for G alpha proteins by stimulating exchange of bound GDP for free GTP. Able to facilitate synaptic transmission in the nervous system probably by activating G(q)-alpha (egl-30). Also able to activate the G(s)-alpha in synaptic signaling network. Plays a key role in asymmetric spindle positioning, a step for asymmetric cell division that generates cell diversity during development by activating G(i)-alpha protein goa-1 and gpa-16 independently of G-protein coupled receptors. While it acts as a GEF for goa-1, it has no GEF activity toward gpa-16. In addition to its GEF activity, it is required for cortical subcellular localization of G-alpha proteins such as gpa-16. Also required for the interaction of goa-1 and gpr-1/2, suggesting that it may act by generating G-alpha proteins free from G-beta-gamma subunits, enabling gpr-1/2 to mediate asymmetric cell division. The polypeptide is Chaperone ric-8 (ric-8) (Caenorhabditis elegans).